A 316-amino-acid chain; its full sequence is 4-hydroxy-3-methylbut-2-enyl diphosphate reductase (316 aa).

Cys12 provides a ligand contact to [4Fe-4S] cluster. 2 residues coordinate (2E)-4-hydroxy-3-methylbut-2-enyl diphosphate: His41 and His74. Residues His41 and His74 each coordinate dimethylallyl diphosphate. Isopentenyl diphosphate is bound by residues His41 and His74. Cys96 provides a ligand contact to [4Fe-4S] cluster. Position 124 (His124) interacts with (2E)-4-hydroxy-3-methylbut-2-enyl diphosphate. His124 contributes to the dimethylallyl diphosphate binding site. His124 contributes to the isopentenyl diphosphate binding site. Glu126 acts as the Proton donor in catalysis. Thr167 lines the (2E)-4-hydroxy-3-methylbut-2-enyl diphosphate pocket. Cys197 is a binding site for [4Fe-4S] cluster. Residues Ser225, Ser226, Asn227, and Ser269 each contribute to the (2E)-4-hydroxy-3-methylbut-2-enyl diphosphate site. Positions 225, 226, 227, and 269 each coordinate dimethylallyl diphosphate. 4 residues coordinate isopentenyl diphosphate: Ser225, Ser226, Asn227, and Ser269.

Belongs to the IspH family. As to quaternary structure, homodimer. [4Fe-4S] cluster serves as cofactor.

It carries out the reaction isopentenyl diphosphate + 2 oxidized [2Fe-2S]-[ferredoxin] + H2O = (2E)-4-hydroxy-3-methylbut-2-enyl diphosphate + 2 reduced [2Fe-2S]-[ferredoxin] + 2 H(+). The enzyme catalyses dimethylallyl diphosphate + 2 oxidized [2Fe-2S]-[ferredoxin] + H2O = (2E)-4-hydroxy-3-methylbut-2-enyl diphosphate + 2 reduced [2Fe-2S]-[ferredoxin] + 2 H(+). Its pathway is isoprenoid biosynthesis; dimethylallyl diphosphate biosynthesis; dimethylallyl diphosphate from (2E)-4-hydroxy-3-methylbutenyl diphosphate: step 1/1. The protein operates within isoprenoid biosynthesis; isopentenyl diphosphate biosynthesis via DXP pathway; isopentenyl diphosphate from 1-deoxy-D-xylulose 5-phosphate: step 6/6. Catalyzes the conversion of 1-hydroxy-2-methyl-2-(E)-butenyl 4-diphosphate (HMBPP) into a mixture of isopentenyl diphosphate (IPP) and dimethylallyl diphosphate (DMAPP). Acts in the terminal step of the DOXP/MEP pathway for isoprenoid precursor biosynthesis. The protein is 4-hydroxy-3-methylbut-2-enyl diphosphate reductase of Klebsiella pneumoniae (strain 342).